Here is a 369-residue protein sequence, read N- to C-terminus: 3-dehydroquinate synthase (369 aa).

NAD(+)-binding positions include 75–80, 109–113, 133–134, Lys146, Lys155, and 173–176; these read DGEEHK, GVIGD, TT, and TLKT. Glu188, His251, and His268 together coordinate Zn(2+).

Belongs to the sugar phosphate cyclases superfamily. Dehydroquinate synthase family. The cofactor is Co(2+). Zn(2+) serves as cofactor. Requires NAD(+) as cofactor.

The protein localises to the cytoplasm. It carries out the reaction 7-phospho-2-dehydro-3-deoxy-D-arabino-heptonate = 3-dehydroquinate + phosphate. The protein operates within metabolic intermediate biosynthesis; chorismate biosynthesis; chorismate from D-erythrose 4-phosphate and phosphoenolpyruvate: step 2/7. In terms of biological role, catalyzes the conversion of 3-deoxy-D-arabino-heptulosonate 7-phosphate (DAHP) to dehydroquinate (DHQ). This is 3-dehydroquinate synthase from Legionella pneumophila (strain Paris).